Consider the following 224-residue polypeptide: Cytidylate kinase (224 aa).

ATP is bound at residue 11–19; that stretch reads GPAAAGKST.

It belongs to the cytidylate kinase family. Type 1 subfamily.

The protein localises to the cytoplasm. The catalysed reaction is CMP + ATP = CDP + ADP. It carries out the reaction dCMP + ATP = dCDP + ADP. This Listeria innocua serovar 6a (strain ATCC BAA-680 / CLIP 11262) protein is Cytidylate kinase.